The sequence spans 330 residues: Phosphate acyltransferase (330 aa).

Belongs to the PlsX family. Homodimer. Probably interacts with PlsY.

The protein resides in the cytoplasm. The catalysed reaction is a fatty acyl-[ACP] + phosphate = an acyl phosphate + holo-[ACP]. It participates in lipid metabolism; phospholipid metabolism. Functionally, catalyzes the reversible formation of acyl-phosphate (acyl-PO(4)) from acyl-[acyl-carrier-protein] (acyl-ACP). This enzyme utilizes acyl-ACP as fatty acyl donor, but not acyl-CoA. This chain is Phosphate acyltransferase, found in Bacillus thuringiensis (strain Al Hakam).